The following is a 418-amino-acid chain: Sialidase-3 (418 aa).

Positions 24 to 27 match the FRIP motif motif; it reads YRIP. Substrate contacts are provided by Arg25 and Arg45. Residue Asp50 is the Proton acceptor of the active site. Residues 129–140 form a BNR 1 repeat; sequence LCSEDAGCSWGE. Tyr179 and Tyr181 together coordinate substrate. One copy of the BNR 2 repeat lies at 203–214; the sequence is SDDFGVTWHHGK. Substrate contacts are provided by Glu223 and Arg243. Residues 254–265 form a BNR 3 repeat; it reads STDSGGCFQKPT. At Ser312 the chain carries Phosphoserine. Residue Arg339 participates in substrate binding. Tyr369 serves as the catalytic Nucleophile. Glu386 is an active-site residue.

This sequence belongs to the glycosyl hydrolase 33 family. As to quaternary structure, interacts with CAV1; this interaction enhances NEU3 sialidase activity within caveola. Interacts with EGFR; this interaction mediates desialylation of EGFR and enhances downstream signaling. Post-translationally, palmitoylated; may regulate intracellular trafficking and anchorage to plasma membrane and endomembranes. In terms of tissue distribution, expressed in heart, brain and cerebral cortex.

The protein localises to the cell membrane. Its subcellular location is the membrane. It is found in the caveola. The protein resides in the early endosome membrane. It localises to the recycling endosome membrane. The protein localises to the lysosome membrane. The catalysed reaction is Hydrolysis of alpha-(2-&gt;3)-, alpha-(2-&gt;6)-, alpha-(2-&gt;8)- glycosidic linkages of terminal sialic acid residues in oligosaccharides, glycoproteins, glycolipids, colominic acid and synthetic substrates.. The enzyme catalyses a ganglioside GD1a + H2O = a ganglioside GM1 + N-acetylneuraminate. It carries out the reaction a ganglioside GD1a (d18:1(4E)) + H2O = a ganglioside GM1 (d18:1(4E)) + N-acetylneuraminate. It catalyses the reaction a ganglioside GD1b + H2O = a ganglioside GM1 + N-acetylneuraminate. The catalysed reaction is a ganglioside GD1b (d18:1(4E)) + H2O = a ganglioside GM1 (d18:1(4E)) + N-acetylneuraminate. The enzyme catalyses a ganglioside GD3 + H2O = a ganglioside GM3 + N-acetylneuraminate. It carries out the reaction a ganglioside GD3 (d18:1(4E)) + H2O = a ganglioside GM3 (d18:1(4E)) + N-acetylneuraminate. It catalyses the reaction a ganglioside GM3 + H2O = a beta-D-galactosyl-(1-&gt;4)-beta-D-glucosyl-(1&lt;-&gt;1)-ceramide + N-acetylneuraminate. The catalysed reaction is a ganglioside GM1 + H2O = a ganglioside GA1 + N-acetylneuraminate. The enzyme catalyses a ganglioside GM1 (d18:1(4E)) + H2O = a ganglioside GA1 (d18:1(4E)) + N-acetylneuraminate. It carries out the reaction a ganglioside GM2 (d18:1(4E)) + H2O = a ganglioside GA2 (d18:1(4E)) + N-acetylneuraminate. It catalyses the reaction a ganglioside GM3 (d18:1(4E)) + H2O = a beta-D-Gal-(1-&gt;4)-beta-D-Glc-(1&lt;-&gt;1)-Cer(d18:1(4E)) + N-acetylneuraminate. The catalysed reaction is a ganglioside GT1b + H2O = a ganglioside GD1b + N-acetylneuraminate. Exo-alpha-sialidase that catalyzes the hydrolytic cleavage of the terminal sialic acid (N-acetylneuraminic acid, Neu5Ac) of a glycan moiety in the catabolism of glycolipids, glycoproteins and oligosacharides. Displays high catalytic efficiency for gangliosides including alpha-(2-&gt;3)-sialylated GD1a and GM3 and alpha-(2-&gt;8)-sialylated GD3. Plays a role in the regulation of transmembrane signaling through the modulation of ganglioside content of the lipid bilayer and by direct interaction with signaling receptors, such as EGFR. Desialylates EGFR and activates downstream signaling in proliferating cells. Contributes to clathrin-mediated endocytosis by regulating sorting of endocytosed receptors to early and recycling endosomes. This chain is Sialidase-3 (Neu3), found in Mus musculus (Mouse).